The following is a 254-amino-acid chain: Triosephosphate isomerase (254 aa).

12 to 14 (NWK) lines the substrate pocket. The active-site Electrophile is the His99. The active-site Proton acceptor is the Glu169. Substrate contacts are provided by residues Gly175, Ser214, and 235–236 (GG).

Belongs to the triosephosphate isomerase family. In terms of assembly, homodimer.

Its subcellular location is the cytoplasm. It catalyses the reaction D-glyceraldehyde 3-phosphate = dihydroxyacetone phosphate. The protein operates within carbohydrate biosynthesis; gluconeogenesis. It participates in carbohydrate degradation; glycolysis; D-glyceraldehyde 3-phosphate from glycerone phosphate: step 1/1. Functionally, involved in the gluconeogenesis. Catalyzes stereospecifically the conversion of dihydroxyacetone phosphate (DHAP) to D-glyceraldehyde-3-phosphate (G3P). The chain is Triosephosphate isomerase from Brucella melitensis biotype 1 (strain ATCC 23456 / CCUG 17765 / NCTC 10094 / 16M).